Here is a 253-residue protein sequence, read N- to C-terminus: Probable transcriptional regulatory protein Tery_2125 (253 aa).

The protein belongs to the TACO1 family.

It localises to the cytoplasm. The protein is Probable transcriptional regulatory protein Tery_2125 of Trichodesmium erythraeum (strain IMS101).